The sequence spans 536 residues: Inactive phospholipase D5 (536 aa).

Over 1 to 68 the chain is Cytoplasmic; that stretch reads MEIRQHEWLS…DKLEHSQQKC (68 aa). A helical membrane pass occupies residues 69–89; it reads IVIFALVCCFAVLVALIFSAV. Residues 90-536 are Extracellular-facing; that stretch reads DIMGEDEDGL…NATGREPLSV (447 aa). Asn121 is a glycosylation site (N-linked (GlcNAc...) asparagine). The region spanning 215-242 is the PLD phosphodiesterase 1 domain; that stretch reads NKGRLQSSFWIVDKQHVYIGSAGLDWRS. The N-linked (GlcNAc...) asparagine glycan is linked to Asn302. Residues 434-460 form the PLD phosphodiesterase 2 domain; sequence FPKLNRNKYMVTDGAAYIGNFDWVGND. Residues 503-536 form a disordered region; that stretch reads QPTKQPNCSSLSKLKSPSKQPAMANATGREPLSV. The span at 511-521 shows a compositional bias: low complexity; that stretch reads SSLSKLKSPSK.

It belongs to the phospholipase D family.

The protein localises to the membrane. The polypeptide is Inactive phospholipase D5 (Pld5) (Mus musculus (Mouse)).